The chain runs to 224 residues: MPARAPRRLVQGPRGTWLLGSLWVWVLCGLGMAGSLGTPQPCQAPQQWEGRQVLYQQSSGHNNRALVSYDGLNQRVRVLDERKALIPCKRLFEYILLYKEGVMFQIEQATKQCAKIPLVESWDPLDIPQNSTFEDQYSIGGPQEQILVQEWSDRRTARSYETWIGVYTAKDCYPVQETFIRNYTVVMSTRFFDVQLGIKDPSVFTPPSTCQAAQPEKMSDGCSL.

The N-terminal stretch at 1-37 (MPARAPRRLVQGPRGTWLLGSLWVWVLCGLGMAGSLG) is a signal peptide. Disulfide bonds link Cys-42–Cys-172, Cys-88–Cys-222, and Cys-113–Cys-210. N-linked (GlcNAc...) asparagine glycans are attached at residues Asn-130 and Asn-182.

It belongs to the ependymin family. Homodimer. In terms of processing, N-glycosylated; the glycan contains mannose-6-phosphate moieties. As to expression, detected in brain, small intestine and in soleus, extensor digitorum longus and white gastrocnemius (at protein level). Detected in brain and skeletal muscle, and at lower leavels in heart.

The protein localises to the lysosome lumen. Its subcellular location is the secreted. Its function is as follows. Binds anionic lipids and gangliosides at acidic pH. This chain is Mammalian ependymin-related protein 1 (Epdr1), found in Mus musculus (Mouse).